The sequence spans 1483 residues: Tyrosine-protein kinase BAZ1B (1483 aa).

The WAC domain maps to 20-126 (EPLFTIPHTQ…GEECDFEVGK (107 aa)). A disordered region spans residues 145–212 (EEATEKKSDG…TSLKKGERKW (68 aa)). Composition is skewed to basic and acidic residues over residues 148-165 (TEKKSDGACDSPSSDKEN) and 172-195 (DHQKKETVVKEDEGRRESINDRAR). A phosphoserine mark is found at S152, S158, and S161. A C motif motif is present at residues 207–213 (KGERKWA). Residue T266 is modified to Phosphothreonine. The segment at 302–333 (NPSTKRKNTGSPDRKPSKKSKTDNSSLSSPLN) is disordered. Phosphoserine is present on residues S330, S345, S347, S349, S361, and S374. Disordered regions lie at residues 379–432 (HTNF…KTPK) and 446–470 (GTQKMTRAPRNSGGTPRTSSKPHKH). Composition is skewed to basic residues over residues 384–395 (IPKKGPPAKKPG) and 423–432 (SPKKGLKTPK). A coiled-coil region spans residues 533-586 (KRWASMSEEQRKEYLKKKREELKKKLKEKAKERREKEMLERLEKQKRYEDQELT). Residues 604-668 (NTLFGDVAMV…LQTLLQDEIA (65 aa)) form the DDT domain. Phosphoserine is present on residues S699, S705, S708, and S716. A coiled-coil region spans residues 768–814 (TRQQMSAELWKERLAVLKEENDKKRAEKQKRKEMEAKNKENGKVENG). The segment covering 788–810 (NDKKRAEKQKRKEMEAKNKENGK) has biased composition (basic and acidic residues). A disordered region spans residues 788 to 817 (NDKKRAEKQKRKEMEAKNKENGKVENGLGK). K826 is covalently cross-linked (Glycyl lysine isopeptide (Lys-Gly) (interchain with G-Cter in SUMO1); alternate). Residue K826 forms a Glycyl lysine isopeptide (Lys-Gly) (interchain with G-Cter in SUMO2); alternate linkage. The stretch at 850 to 893 (IQAKKEREIQEREMKVKLERQAEEERIRKHKAAAEKAFQEGIAK) forms a coiled coil. K853 is covalently cross-linked (Glycyl lysine isopeptide (Lys-Gly) (interchain with G-Cter in SUMO2)). Phosphoserine is present on S947. Residues K1043, K1089, and K1107 each participate in a glycyl lysine isopeptide (Lys-Gly) (interchain with G-Cter in SUMO2) cross-link. The segment at 1184–1234 (NARCKVCRKKGEDDKLILCDECNKAFHLFCLRPALYEVPDGEWQCPACQPA) adopts a PHD-type zinc-finger fold. A disordered region spans residues 1237–1326 (RRNSRGRNYT…PKAPPVDDAE (90 aa)). Residues 1245-1283 (YTEESASEDSEDDESDEEEEEEEEEEEEEDYEVAGLRLR) adopt a coiled-coil conformation. Over residues 1249-1276 (SASEDSEDDESDEEEEEEEEEEEEEDYE) the composition is skewed to acidic residues. Composition is skewed to basic residues over residues 1282 to 1292 (LRPRKTIRGKH) and 1301 to 1316 (SGRRPGKKPHSTRRSQ). S1315 is subject to Phosphoserine. K1335 is modified (N6-acetyllysine). The Bromo domain occupies 1339–1443 (RRQSLELQKC…QCLVALLHKH (105 aa)). Residues S1342 and S1468 each carry the phosphoserine modification. The disordered stretch occupies residues 1455–1483 (KKFPDRLAEDEGDSEPEAVGQSRGRRQKK).

It belongs to the WAL family. BAZ1B subfamily. In terms of assembly, component of the WICH-1 ISWI chromatin remodeling complex, at least composed of SMARCA1 and BAZ1B/WSTF, which regulates the spacing of histone octamers on the DNA template to facilitate access to DNA. Within the WICH-1 ISWI chromatin remodeling complex interacts with SMARCA1; the interaction is direct. Component of the WICH-5 ISWI chromatin remodeling complex (also called the WICH complex), at least composed of SMARCA5/SNF2H and BAZ1B/WSTF, which regulates the spacing of histone octamers on the DNA template to facilitate access to DNA. Within the WICH-5 ISWI chromatin remodeling complex interacts with SMARCA5/SNF2H; the interaction is direct. Component of the B-WICH chromatin remodeling complex, at least composed of SMARCA5/SNF2H, BAZ1B/WSTF, SF3B1, DEK, MYO1C, ERCC6, MYBBP1A and DDX21. Within the B-WICH chromatin remodeling complex, interacts with SMARCA5/SNF2H, DDX21, DEK, MYBBP1A, SF3B1, ERCC6 and MYO1C. Interacts with PCNA; the interaction is direct and is required for BAZ1B/WSTF binding to replication foci during S phase. Interacts with CDT1. It depends on Mn(2+) as a cofactor. Ubiquitously expressed with high levels of expression in heart, brain, placenta, skeletal muscle and ovary.

The protein resides in the nucleus. The catalysed reaction is L-tyrosyl-[protein] + ATP = O-phospho-L-tyrosyl-[protein] + ADP + H(+). Atypical tyrosine-protein kinase that plays a central role in chromatin remodeling and acts as a transcription regulator. Involved in DNA damage response by phosphorylating 'Tyr-142' of histone H2AX (H2AXY142ph). H2AXY142ph plays a central role in DNA repair and acts as a mark that distinguishes between apoptotic and repair responses to genotoxic stress. Regulatory subunit of the ATP-dependent WICH-1 and WICH-5 ISWI chromatin remodeling complexes, which form ordered nucleosome arrays on chromatin and facilitate access to DNA during DNA-templated processes such as DNA replication, transcription, and repair. Both complexes regulate the spacing of nucleosomes along the chromatin and have the ability to slide mononucleosomes to the center of a DNA template. The WICH-1 ISWI chromatin remodeling complex has a lower ATP hydrolysis rate than the WICH-5 ISWI chromatin remodeling complex. The WICH-5 ISWI chromatin-remodeling complex regulates the transcription of various genes, has a role in RNA polymerase I transcription. Within the B-WICH complex has a role in RNA polymerase III transcription. Mediates the recruitment of the WICH-5 ISWI chromatin remodeling complex to replication foci during DNA replication. This chain is Tyrosine-protein kinase BAZ1B (BAZ1B), found in Homo sapiens (Human).